A 328-amino-acid chain; its full sequence is Apoptosis facilitator Bcl-2-like protein 14 (328 aa).

S44 is modified (phosphoserine). A BH3 motif is present at residues I213–E227. The BH2 motif lies at W309–W316.

The protein belongs to the Bcl-2 family. Phosphorylated by MELK, leading to inhibit its pro-apoptotic function.

Its subcellular location is the cytoplasm. Functionally, plays a role in apoptosis. The chain is Apoptosis facilitator Bcl-2-like protein 14 (Bcl2l14) from Mus musculus (Mouse).